A 141-amino-acid chain; its full sequence is Hemoglobin subunit alpha (141 aa).

The region spanning 1–141 (VLSPADKSNV…VSTVLTSKYR (141 aa)) is the Globin domain. Ser-3 is subject to Phosphoserine. 2 positions are modified to N6-succinyllysine: Lys-7 and Lys-11. An N6-acetyllysine; alternate modification is found at Lys-16. Position 16 is an N6-succinyllysine; alternate (Lys-16). Tyr-24 bears the Phosphotyrosine mark. Ser-35 carries the phosphoserine modification. Lys-40 is modified (N6-succinyllysine). Position 49 is a phosphoserine (Ser-49). His-58 provides a ligand contact to O2. Residue His-87 coordinates heme b. Residue Ser-102 is modified to Phosphoserine. Phosphothreonine is present on Thr-108. Phosphoserine occurs at positions 124 and 131. Phosphothreonine occurs at positions 134 and 137. A Phosphoserine modification is found at Ser-138.

The protein belongs to the globin family. Heterotetramer of two alpha chains and two beta chains. In terms of tissue distribution, red blood cells.

Involved in oxygen transport from the lung to the various peripheral tissues. Functionally, hemopressin acts as an antagonist peptide of the cannabinoid receptor CNR1. Hemopressin-binding efficiently blocks cannabinoid receptor CNR1 and subsequent signaling. The chain is Hemoglobin subunit alpha (HBA) from Saguinus mystax (Moustached tamarin).